A 495-amino-acid polypeptide reads, in one-letter code: Surface E' protein (495 aa).

The chain crosses the membrane as a helical span at residues 224-235; that stretch reads GTLIGLVALIGV.

It localises to the cell membrane. The protein is Surface E' protein (cbbE') of Coxiella burnetii.